Here is a 2249-residue protein sequence, read N- to C-terminus: MANISPKLFKKAIQQGLKAALFTTSTAAIMLSSSGALGVATGVIATNNNAAFSNNVGNNNWNEITAAGVANGTPAGGPQNNWAFTYGGDYTVTADAADRIIKAINVAGTTPVGLNITQNTVVGSIITKGNLLPVTLNAGKSLTLNGNNAVAANHGFDAPADNYTGLGNIALGGANAALIIQSAAPSKITLAGNIDGGGIITVKTDAAINGTIGNTNALATVNVGAGTATLGGAVIKATTTKLTNAASVLTLTNANAVLTGAIDNTTGGDNVGVLNLNGALSQVTGDIGNTNSLATISVGAGTATLGGAVIKATTTKLTDAASAVKFTNPVVVTGAIDNTGNANNGIVTFTGNSTVTGNVGNTNALATVNVGAGLLQVQGGVVKANTINLTDNASAVTFTNPVVVTGAIDNTGNANNGIVTFTGNSTVTGDIGNTNALATVNVGAGTATLGGAVIKATTTKLTNAASVLTLTNANAVLTGAIDNTTGGDNVGVLNLNGALSQVTGNIGNTNSLATISVGAGTATLGGAVIKATTTKLTDAASAVKFTNPVVVTGAIDNTGNANNGIVTFTGNSTVTGDIGNTNSLATISVGAGTATLGGAVIKATTTKLTNAASVLTLTNANAVLTGAIDNTTGGDNVGVLNLNGALSQVTGDIGNTNSLATISVGAGTATLGGAVIKATTTKITNAVSAVKFTNPVVVTGAIDSTGNANNGIVTFTGNSTVTGDIGNTNALATVNVGAGTATLGGAVIKATTTKLTNAASVLTLTNANAVLTGAIDNTTGGDNVGVLNLNGALSQVTGDIGNTNSLATISVGAGTATLGGAVIKATTTKLTNAASVLTLTNANAVLTGAVDNTTGGDNVGVLNLNGALSQVTGDIGNTNSLATISVGAGTATLGGAVIKATTTKLTNAASVLTLTNANAVLTGAIDNTTGGDNVGVLNLNGALSQVTGDIGNTNSLATISVGAGTATLGGAVIKATTTKLTDAASAVKFTNPVVVTGAIDNTGNANNGIVTFTGNSTVTGNVGNTNALATVNVGAGLLQVQGGVVKANTINLTDNASAVTFTNPVVVTGAIDNTGNANNGIVTFTGNSTVTGNVGNTNALATVNVGAGLLQVQGGVVKANTINLTDNASAVTFTNPVVVTGAIDNTGNANNGIVTFTGNSTVTGDIGNTNALATVNVGAGITLQAGGSLAANNIDFGARSTLEFNGPLDGGGKAIPYYFKGAIANGNNAILNVNTKLLTASHLTIGTVAEINIGAGNLFTIDASVGDVTILNAQNINFRARDSVLVLSNLTGVGVNNILLAADLVAPGADEGTVVFNGGVNGLNVGSNVAGTARNIGDGGGNKFNTLLIYNAVTITDDVNLEGIQNVLINKNADFTSSTAFNAGAIQINDATYTIDANNGNLNIPAGNIQFAHADAQLVLQNSSGNDRTITLGANIDPDNDDEGIVILNSVTAGKKLTIAGGKTFGGAHKLQTILFKGAGDCSTAGTTFNTTNIVLDITGQLELGATTANVVLFNDAVQLTQTGNIGGFLDFNAKNGMVTLNNNVNVAGAVQNTGGTNNGTLIVLGASNLNRVNGIAMLKVGAGNVTIAKGGKVKIGEIQGTGTNTLTLPAHFNLTGSINKTGGQALKLNFMNGGSVSGVVGTAANSVGDITTAGATSFASSVNAKGTATLGGTTSFANTFTNTGAVTLAKGSITSFAKNVTATSFVANSATINFSNSLAFNSNITGGGTTLTLGANQVTYTGTGSFTDTLTLNTTFDGAAKSGGNILIKSGSTLDLSGVSTLALVVTATNFDMNNISPDTKYTVISAETAGGLKPTSKENVKITINNDNRFVDFTFDASTLTLFAEDIAADVIDGDFAPGGPLANIPNAANIKKSLELMEDAPNGSDARQAFNNFGLMTPLQEADATTHLIQDVVKPSDTIAAVNNQVVASNISSNITALNARMDKVQSGNKGPVSSGDEDMDAKFGAWISPFVGNATQKMCNSISGYKSDTTGGTIGFDGFVSDDLALGLAYTRADTDIKLKNNKTGDKNKVESNIYSLYGLYNVPYENLFVEAIASYSDNKIRSKSRRVIATTLETVGYQTANGKYKSESYTGQLMAGYTYMMPENINLTPLAGLRYSTIKDKGYKETGTTYQNLTVKGKNYNTFDGLLGAKVSSNINVNEIVLTPELYAMVDYAFKNKVSAIDARLQGMTAPLPTNSFKQSKTSFDVGVGVTAKHKMMEYRINYDTNIGSKYFAQQGSVKVRVNF.

A signal peptide spans 1–28 (MANISPKLFKKAIQQGLKAALFTTSTAA). Residues 212–286 (IGNTNALATV…NGALSQVTGD (75 aa)) form a Type I 1 repeat. The tract at residues 212–1180 (IGNTNALATV…ALATVNVGAG (969 aa)) is 14 X approximate tandem repeats. Type II repeat units lie at residues 287–358 (IGNT…VTGN) and 359–430 (VGNT…VTGD). The Type I 2 repeat unit spans residues 431-505 (IGNTNALATV…NGALSQVTGN (75 aa)). One copy of the Type II 3 repeat lies at 506–577 (IGNTNSLATI…FTGNSTVTGD (72 aa)). A Type I 3 repeat occupies 578 to 652 (IGNTNSLATI…NGALSQVTGD (75 aa)). Residues 653-724 (IGNTNSLATI…FTGNSTVTGD (72 aa)) form a Type II 4 repeat. Type I repeat units lie at residues 725–799 (IGNT…VTGD), 800–874 (IGNT…VTGD), and 875–949 (IGNT…VTGD). Type II repeat units follow at residues 950–1021 (IGNT…VTGN), 1022–1093 (VGNT…VTGN), and 1094–1165 (VGNT…VTGD). One copy of the Type I 7; truncated repeat lies at 1166–1180 (IGNTNALATVNVGAG). One can recognise an Autotransporter domain in the interval 1962 to 2249 (DMDAKFGAWI…QGSVKVRVNF (288 aa)).

This sequence belongs to the rickettsiae OmpA/OmpB family. Glycosylated.

It localises to the periplasm. The protein localises to the secreted. It is found in the cell surface. The protein resides in the cell outer membrane. Functionally, elicits protective immunity. This Rickettsia rickettsii protein is Outer membrane protein A (ompA).